The following is a 340-amino-acid chain: Phosphate acyltransferase (340 aa).

It belongs to the PlsX family. In terms of assembly, homodimer. Probably interacts with PlsY.

Its subcellular location is the cytoplasm. It carries out the reaction a fatty acyl-[ACP] + phosphate = an acyl phosphate + holo-[ACP]. The protein operates within lipid metabolism; phospholipid metabolism. Its function is as follows. Catalyzes the reversible formation of acyl-phosphate (acyl-PO(4)) from acyl-[acyl-carrier-protein] (acyl-ACP). This enzyme utilizes acyl-ACP as fatty acyl donor, but not acyl-CoA. This chain is Phosphate acyltransferase, found in Nostoc punctiforme (strain ATCC 29133 / PCC 73102).